Here is a 534-residue protein sequence, read N- to C-terminus: Cytochalasin cluster regulator ccsR (534 aa).

The zn(2)-C6 fungal-type DNA-binding region spans 13-54; it reads CDRCRRQKLRCVRPLKHGACEHPNNIEALEPCERCSRAGTPC. Disordered regions lie at residues 88 to 170 and 350 to 378; these read IPKQ…LDAP and TSAR…SAAS. Residues 109–125 show a composition bias toward polar residues; sequence TGQNKGINDANAVTGSL. The segment covering 130 to 146 has biased composition (basic and acidic residues); the sequence is PDHRSGSNVHRQPEARP. Residues 361–378 are compositionally biased toward low complexity; that stretch reads DMCASSSNRDSSDLSAAS.

The protein localises to the nucleus. Functionally, transcription factor involved in regulation of gene cluster that mediates the biosynthesis of the mycotoxins cytochalasins E and K. The protein is Cytochalasin cluster regulator ccsR of Aspergillus clavatus (strain ATCC 1007 / CBS 513.65 / DSM 816 / NCTC 3887 / NRRL 1 / QM 1276 / 107).